We begin with the raw amino-acid sequence, 934 residues long: Glycine dehydrogenase (decarboxylating) (934 aa).

Lys687 is modified (N6-(pyridoxal phosphate)lysine).

Belongs to the GcvP family. As to quaternary structure, the glycine cleavage system is composed of four proteins: P, T, L and H. Pyridoxal 5'-phosphate serves as cofactor.

The enzyme catalyses N(6)-[(R)-lipoyl]-L-lysyl-[glycine-cleavage complex H protein] + glycine + H(+) = N(6)-[(R)-S(8)-aminomethyldihydrolipoyl]-L-lysyl-[glycine-cleavage complex H protein] + CO2. The glycine cleavage system catalyzes the degradation of glycine. The P protein binds the alpha-amino group of glycine through its pyridoxal phosphate cofactor; CO(2) is released and the remaining methylamine moiety is then transferred to the lipoamide cofactor of the H protein. In Nocardia farcinica (strain IFM 10152), this protein is Glycine dehydrogenase (decarboxylating).